The primary structure comprises 472 residues: Chromosomal replication initiator protein DnaA (472 aa).

The tract at residues 1 to 73 is domain I, interacts with DnaA modulators; the sequence is MSNMEQDRWS…LSCWQAELPE (73 aa). The segment at 73–128 is domain II; that stretch reads EVNRVDLTVRSPVRCAAPAKEAPAPVESRRDEQRPSAERSNGATPVSANHDALGGS. The disordered stretch occupies residues 89–124; the sequence is APAKEAPAPVESRRDEQRPSAERSNGATPVSANHDA. The segment covering 99 to 109 has biased composition (basic and acidic residues); that stretch reads ESRRDEQRPSA. A compositionally biased stretch (polar residues) spans 110 to 119; it reads ERSNGATPVS. The segment at 129–351 is domain III, AAA+ region; the sequence is PLDPRLTFAS…GAINRLLAHS (223 aa). Gly-176, Gly-178, Lys-179, and Thr-180 together coordinate ATP. The tract at residues 352–472 is domain IV, binds dsDNA; the sequence is KLNNQPVTLE…VESLKRQLQE (121 aa).

The protein belongs to the DnaA family. In terms of assembly, oligomerizes as a right-handed, spiral filament on DNA at oriC.

The protein localises to the cytoplasm. Plays an essential role in the initiation and regulation of chromosomal replication. ATP-DnaA binds to the origin of replication (oriC) to initiate formation of the DNA replication initiation complex once per cell cycle. Binds the DnaA box (a 9 base pair repeat at the origin) and separates the double-stranded (ds)DNA. Forms a right-handed helical filament on oriC DNA; dsDNA binds to the exterior of the filament while single-stranded (ss)DNA is stabiized in the filament's interior. The ATP-DnaA-oriC complex binds and stabilizes one strand of the AT-rich DNA unwinding element (DUE), permitting loading of DNA polymerase. After initiation quickly degrades to an ADP-DnaA complex that is not apt for DNA replication. Binds acidic phospholipids. This chain is Chromosomal replication initiator protein DnaA, found in Rhodopseudomonas palustris (strain TIE-1).